Consider the following 361-residue polypeptide: Histidinol-phosphate aminotransferase (361 aa).

K219 bears the N6-(pyridoxal phosphate)lysine mark.

The protein belongs to the class-II pyridoxal-phosphate-dependent aminotransferase family. Histidinol-phosphate aminotransferase subfamily. Homodimer. The cofactor is pyridoxal 5'-phosphate.

The enzyme catalyses L-histidinol phosphate + 2-oxoglutarate = 3-(imidazol-4-yl)-2-oxopropyl phosphate + L-glutamate. It participates in amino-acid biosynthesis; L-histidine biosynthesis; L-histidine from 5-phospho-alpha-D-ribose 1-diphosphate: step 7/9. The protein is Histidinol-phosphate aminotransferase of Acinetobacter baylyi (strain ATCC 33305 / BD413 / ADP1).